Reading from the N-terminus, the 553-residue chain is Chaperonin GroEL (553 aa).

ATP is bound by residues 30–33, Lys51, 87–91, Gly416, and Asp496; these read TLGP and DGTTT.

This sequence belongs to the chaperonin (HSP60) family. Forms a cylinder of 14 subunits composed of two heptameric rings stacked back-to-back. Interacts with the co-chaperonin GroES.

It localises to the cytoplasm. It catalyses the reaction ATP + H2O + a folded polypeptide = ADP + phosphate + an unfolded polypeptide.. Its function is as follows. Together with its co-chaperonin GroES, plays an essential role in assisting protein folding. The GroEL-GroES system forms a nano-cage that allows encapsulation of the non-native substrate proteins and provides a physical environment optimized to promote and accelerate protein folding. The sequence is that of Chaperonin GroEL from Alkalilimnicola ehrlichii (strain ATCC BAA-1101 / DSM 17681 / MLHE-1).